Here is a 94-residue protein sequence, read N- to C-terminus: Ferredoxin-like protein (94 aa).

4Fe-4S ferredoxin-type domains lie at 20–52 (PHIRIKDPDHCTELSEKQCTVCCPAGCYTRETN) and 53–83 (GKVTLVTDGCLECGTCRIICQDSGNLEWEWP).

This sequence to ferredoxins from P.putida and C.tartarivorum, ferredoxin I from A.vinelandii, ferredoxin II from D.desulfuricans.

In terms of biological role, could be a 3Fe-4S cluster-containing protein. This is Ferredoxin-like protein (fixX) from Azotobacter vinelandii.